A 545-amino-acid chain; its full sequence is Probable sucrose-6-phosphate hydrolase (545 aa).

Substrate contacts are provided by residues 107-110 (LLND), Q126, 169-170 (FS), 230-231 (RD), and E285. D110 is an active-site residue.

Belongs to the glycosyl hydrolase 32 family.

It localises to the cytoplasm. It catalyses the reaction Hydrolysis of terminal non-reducing beta-D-fructofuranoside residues in beta-D-fructofuranosides.. It functions in the pathway glycan biosynthesis; sucrose metabolism. Enables the bacterium to metabolize sucrose as a sole carbon source. The polypeptide is Probable sucrose-6-phosphate hydrolase (Psychromonas ingrahamii (strain DSM 17664 / CCUG 51855 / 37)).